Reading from the N-terminus, the 161-residue chain is Nucleotide-binding protein PFL_4775 (161 aa).

It belongs to the YajQ family.

Nucleotide-binding protein. The protein is Nucleotide-binding protein PFL_4775 of Pseudomonas fluorescens (strain ATCC BAA-477 / NRRL B-23932 / Pf-5).